We begin with the raw amino-acid sequence, 421 residues long: Imidazolonepropionase (421 aa).

Positions 81 and 83 each coordinate Fe(3+). Positions 81 and 83 each coordinate Zn(2+). 4-imidazolone-5-propanoate contacts are provided by Arg90, Tyr153, and His186. Tyr153 lines the N-formimidoyl-L-glutamate pocket. His251 is a binding site for Fe(3+). Residue His251 participates in Zn(2+) binding. Glu254 is a 4-imidazolone-5-propanoate binding site. Asp326 lines the Fe(3+) pocket. Residue Asp326 participates in Zn(2+) binding. 2 residues coordinate N-formimidoyl-L-glutamate: Asn328 and Gly330. 4-imidazolone-5-propanoate is bound at residue Ser331.

The protein belongs to the metallo-dependent hydrolases superfamily. HutI family. Zn(2+) is required as a cofactor. The cofactor is Fe(3+).

Its subcellular location is the cytoplasm. It carries out the reaction 4-imidazolone-5-propanoate + H2O = N-formimidoyl-L-glutamate. Its pathway is amino-acid degradation; L-histidine degradation into L-glutamate; N-formimidoyl-L-glutamate from L-histidine: step 3/3. In terms of biological role, catalyzes the hydrolytic cleavage of the carbon-nitrogen bond in imidazolone-5-propanoate to yield N-formimidoyl-L-glutamate. It is the third step in the universal histidine degradation pathway. This chain is Imidazolonepropionase, found in Streptococcus gordonii (strain Challis / ATCC 35105 / BCRC 15272 / CH1 / DL1 / V288).